Consider the following 405-residue polypeptide: Deoxyguanosinetriphosphate triphosphohydrolase-like protein (405 aa).

In terms of domain architecture, HD spans 75-219 (RLTHTIEVAQ…AAIADDIAYN (145 aa)).

Belongs to the dGTPase family. Type 2 subfamily.

The protein is Deoxyguanosinetriphosphate triphosphohydrolase-like protein of Sinorhizobium medicae (strain WSM419) (Ensifer medicae).